A 90-amino-acid chain; its full sequence is Nodulation protein NolS (90 aa).

In terms of biological role, involved in nodulation of a particular host, M.lupulina. The chain is Nodulation protein NolS (nolS) from Sinorhizobium meliloti (strain Sm2011 / Rm2011 / 2011).